The following is a 345-amino-acid chain: Molybdate/tungstate import ATP-binding protein WtpC (345 aa).

The ABC transporter domain maps to 2–231; it reads LKVESISKDY…PKSEEVARFL (230 aa). Position 33–40 (33–40) interacts with ATP; the sequence is GPSGSGKT. The Mop domain maps to 280 to 345; it reads KTSARNVFKA…FKASAIHVFP (66 aa).

This sequence belongs to the ABC transporter superfamily. Sulfate/tungstate importer (TC 3.A.1.6) family. In terms of assembly, the complex is composed of two ATP-binding proteins (WtpC), two transmembrane proteins (WtpB) and a solute-binding protein (WtpA).

The protein localises to the cell membrane. The enzyme catalyses tungstate(in) + ATP + H2O = tungstate(out) + ADP + phosphate + H(+). In terms of biological role, part of the ABC transporter complex WtpABC involved in molybdate/tungstate import. Responsible for energy coupling to the transport system. The sequence is that of Molybdate/tungstate import ATP-binding protein WtpC (wtpC) from Pyrococcus horikoshii (strain ATCC 700860 / DSM 12428 / JCM 9974 / NBRC 100139 / OT-3).